The following is a 393-amino-acid chain: L-rhamnonate dehydratase (393 aa).

Positions 22 and 48 each coordinate substrate. Mg(2+) is bound by residues Asp-214, Glu-241, and Glu-269. His-319 acts as the Proton acceptor in catalysis. Glu-339 contacts substrate.

This sequence belongs to the mandelate racemase/muconate lactonizing enzyme family. RhamD subfamily. Homooctamer; tetramer of dimers. The cofactor is Mg(2+).

It carries out the reaction L-rhamnonate = 2-dehydro-3-deoxy-L-rhamnonate + H2O. Functionally, catalyzes the dehydration of L-rhamnonate to 2-keto-3-deoxy-L-rhamnonate (KDR). This is L-rhamnonate dehydratase from Azorhizobium caulinodans (strain ATCC 43989 / DSM 5975 / JCM 20966 / LMG 6465 / NBRC 14845 / NCIMB 13405 / ORS 571).